A 296-amino-acid polypeptide reads, in one-letter code: Alpha/beta-gliadin clone PW1215 (296 aa).

An N-terminal signal peptide occupies residues 1-20; it reads MKTFLILALLAIVATTATTA. Disordered stretches follow at residues 24 to 126 and 220 to 255; these read PVPQ…QAQQ and SSQV…VQPQ. Residues 25–36 are compositionally biased toward pro residues; it reads VPQPQPQNPSQP. Over residues 37–58 the composition is skewed to low complexity; the sequence is QPQGQVPLVQQQQFPGQQQQFP. 2 stretches are compositionally biased toward pro residues: residues 59–71 and 81–116; these read PQQP…PFPS and FPQP…PQPQ. Low complexity-rich tracts occupy residues 117 to 126 and 220 to 241; these read QPISQQQAQQ and SSQV…FFQP. Positions 242 to 255 are enriched in polar residues; sequence SQQNPQAQGSVQPQ.

It belongs to the gliadin/glutenin family. Post-translationally, substrate of transglutaminase.

Functionally, gliadin is the major seed storage protein in wheat. This Triticum aestivum (Wheat) protein is Alpha/beta-gliadin clone PW1215.